Consider the following 145-residue polypeptide: Large ribosomal subunit protein uL11 (145 aa).

The protein belongs to the universal ribosomal protein uL11 family. Part of the ribosomal stalk of the 50S ribosomal subunit. Interacts with L10 and the large rRNA to form the base of the stalk. L10 forms an elongated spine to which L12 dimers bind in a sequential fashion forming a multimeric L10(L12)X complex. Post-translationally, one or more lysine residues are methylated.

Functionally, forms part of the ribosomal stalk which helps the ribosome interact with GTP-bound translation factors. The sequence is that of Large ribosomal subunit protein uL11 from Rickettsia canadensis (strain McKiel).